The sequence spans 213 residues: Superoxide dismutase [Fe] (213 aa).

Fe cation-binding residues include H28, H82, D164, and H168.

This sequence belongs to the iron/manganese superoxide dismutase family. In terms of assembly, homotetramer. It depends on Fe cation as a cofactor.

It carries out the reaction 2 superoxide + 2 H(+) = H2O2 + O2. Destroys superoxide anion radicals which are normally produced within the cells and which are toxic to biological systems. The sequence is that of Superoxide dismutase [Fe] (sodB) from Aquifex pyrophilus.